The chain runs to 691 residues: Glycine--tRNA ligase beta subunit (691 aa).

This sequence belongs to the class-II aminoacyl-tRNA synthetase family. As to quaternary structure, tetramer of two alpha and two beta subunits.

Its subcellular location is the cytoplasm. It catalyses the reaction tRNA(Gly) + glycine + ATP = glycyl-tRNA(Gly) + AMP + diphosphate. This Limosilactobacillus reuteri (strain DSM 20016) (Lactobacillus reuteri) protein is Glycine--tRNA ligase beta subunit.